The sequence spans 250 residues: Peptidyl-tRNA hydrolase (250 aa).

Tyr14 is a tRNA binding site. The active-site Proton acceptor is His19. Phe64, Asn66, and Asn112 together coordinate tRNA. Residues Met192–Asp250 form a disordered region. A compositionally biased stretch (polar residues) spans His219–Lys229. Residues Met241–Asp250 are compositionally biased toward basic and acidic residues.

The protein belongs to the PTH family. Monomer.

The protein resides in the cytoplasm. It carries out the reaction an N-acyl-L-alpha-aminoacyl-tRNA + H2O = an N-acyl-L-amino acid + a tRNA + H(+). In terms of biological role, hydrolyzes ribosome-free peptidyl-tRNAs (with 1 or more amino acids incorporated), which drop off the ribosome during protein synthesis, or as a result of ribosome stalling. Functionally, catalyzes the release of premature peptidyl moieties from peptidyl-tRNA molecules trapped in stalled 50S ribosomal subunits, and thus maintains levels of free tRNAs and 50S ribosomes. The sequence is that of Peptidyl-tRNA hydrolase from Brucella suis (strain ATCC 23445 / NCTC 10510).